The primary structure comprises 448 residues: MKSTVETLSPTRVRLAIEVPFVELEPSLKKAYREIGQQVQVPGFRRGKVPAVVIDQRVGRGTVLNEAVQEAIPQNILAAVREHDLKTLGRPEVEITEFTDGDSLNFTAEVDVRPELTLPDLSTVEVTVDELKIDDSEIDEQVQSLRERFATLKTVDRAAGEGDFVQIDLNATVDGEEVPGGSASNLSHEVGSKQLLPGLDEAVVGLAAGASTTFTTQLVGGDHAGRDAEVSVTVRTVKEKELPELDDEFAELASEFDTMAELRDDVRERVTRGKRVEQIYAARDKALEQIVEAADVPAPEGVVREEVESRKTAMVDQLERIGASMEEYLAAEEKTEEQIDTELNEAAVQGVKIQLLLDTVADAEDVQVSDDEFGHEIVHRAQRAGVAPQQFYDQLVRSGAAGAVYGDVRRGKALASIMDRITIRDAAGEPVSLDALRAENEAEHAHAE.

Positions 162–243 constitute a PPIase FKBP-type domain; that stretch reads GDFVQIDLNA…VRTVKEKELP (82 aa).

This sequence belongs to the FKBP-type PPIase family. Tig subfamily.

Its subcellular location is the cytoplasm. The catalysed reaction is [protein]-peptidylproline (omega=180) = [protein]-peptidylproline (omega=0). In terms of biological role, involved in protein export. Acts as a chaperone by maintaining the newly synthesized protein in an open conformation. Functions as a peptidyl-prolyl cis-trans isomerase. This is Trigger factor from Salinispora arenicola (strain CNS-205).